The primary structure comprises 222 residues: Transmembrane reductase CYB561D2 (222 aa).

Over 2-17 the chain is Cytoplasmic; the sequence is ALSVETESHIYRALRT. In terms of domain architecture, Cytochrome b561 spans 14-217; it reads ALRTASGAAA…NQVSNAYLYR (204 aa). The helical transmembrane segment at 18–38 threads the bilayer; that stretch reads ASGAAAHLVALGFTIFVAVLA. The Lumenal segment spans residues 39-46; it reads RPGSSLFS. The helical transmembrane segment at 47-67 threads the bilayer; the sequence is WHPVLMSLAFSFLMTEALLMF. Histidine 48 serves as a coordination point for heme b. The Cytoplasmic segment spans residues 68–85; sequence SPESSLLRSLSRKVRARC. Heme b is bound by residues histidine 86 and histidine 120. A helical transmembrane segment spans residues 86 to 106; sequence HWVLQLLALLCALLGLGLVIL. The Lumenal portion of the chain corresponds to 107-122; the sequence is HKEQLGKAHLTTRHGQ. The chain crosses the membrane as a helical span at residues 123-143; it reads AGLLAVLWAGLQCSGGMGLLY. The Cytoplasmic portion of the chain corresponds to 144 to 162; the sequence is PKLLPRWPLAKLKLYHATS. Histidine 159 is a heme b binding site. A helical membrane pass occupies residues 163 to 183; it reads GLVGYLLGSASLLLGMFSLWF. The Lumenal segment spans residues 184 to 186; that stretch reads TAT. Residues 187–207 traverse the membrane as a helical segment; it reads VTGGAWYLAVLCPILTSLVIM. At 208–222 the chain is on the cytoplasmic side; sequence NQVSNAYLYRKRIQP.

Heme b serves as cofactor. Highly expressed in the brain, lung, liver, and kidney. Moderately expressed in the heart, placenta, skeletal muscle, and pancreas.

The protein localises to the endoplasmic reticulum membrane. It is found in the cytoplasmic vesicle membrane. The catalysed reaction is monodehydro-L-ascorbate radical(out) + L-ascorbate(in) = monodehydro-L-ascorbate radical(in) + L-ascorbate(out). The enzyme catalyses Fe(3+)(out) + L-ascorbate(in) = monodehydro-L-ascorbate radical(in) + Fe(2+)(out) + H(+). Functionally, transmembrane reductase that may use ascorbate as an electron donor in the cytoplasm and transfer electrons across endoplasmic reticulum membranes to reduce monodehydro-L-ascorbate radical and iron cations Fe(3+) in the lumen of that compartment. This chain is Transmembrane reductase CYB561D2, found in Mus musculus (Mouse).